Reading from the N-terminus, the 466-residue chain is DNA repair protein RadA (466 aa).

The C4-type zinc-finger motif lies at 12 to 29 (CSECQHVAPKWVGRCANC). Residue 100–107 (GDPGVGKS) coordinates ATP. A RadA KNRFG motif motif is present at residues 261 to 265 (KNRFG). Positions 359–466 (DLYLSTVGGM…MREIAIAGAQ (108 aa)) are lon-protease-like.

Belongs to the RecA family. RadA subfamily. In terms of assembly, interacts with DisA.

Its function is as follows. DNA-dependent ATPase involved in processing of recombination intermediates, plays a role in repairing DNA breaks. Stimulates the branch migration of RecA-mediated strand transfer reactions, allowing the 3' invading strand to extend heteroduplex DNA faster. Binds ssDNA in the presence of ADP but not other nucleotides, has ATPase activity that is stimulated by ssDNA and various branched DNA structures, but inhibited by SSB. Does not have RecA's homology-searching function. Also inhibits the diadenylate cyclase activity of DisA. The protein is DNA repair protein RadA of Mycolicibacterium smegmatis (strain ATCC 700084 / mc(2)155) (Mycobacterium smegmatis).